The following is a 798-amino-acid chain: Type 2 DNA topoisomerase 6 subunit B (798 aa).

Residues Asn60, Asp91, 112–113 (SR), and 122–129 (GQQGIGIS) contribute to the ATP site. Basic and acidic residues predominate over residues 221–233 (EPEDSFKSERATE). The segment at 221–245 (EPEDSFKSERATEELPPETEEIRPH) is disordered. Lys629 provides a ligand contact to ATP.

Belongs to the TOP6B family. As to quaternary structure, homodimer. Heterotetramer of two Top6A and two Top6B chains.

The catalysed reaction is ATP-dependent breakage, passage and rejoining of double-stranded DNA.. Functionally, relaxes both positive and negative superturns and exhibits a strong decatenase activity. The polypeptide is Type 2 DNA topoisomerase 6 subunit B (Natronomonas pharaonis (strain ATCC 35678 / DSM 2160 / CIP 103997 / JCM 8858 / NBRC 14720 / NCIMB 2260 / Gabara) (Halobacterium pharaonis)).